Here is a 214-residue protein sequence, read N- to C-terminus: Cell division protein SepF (214 aa).

A disordered region spans residues 25 to 51 (EDDDRGARAGGYSRRPREDRFEEEAYG).

This sequence belongs to the SepF family. As to quaternary structure, homodimer. Interacts with FtsZ.

Its subcellular location is the cytoplasm. Its function is as follows. Cell division protein that is part of the divisome complex and is recruited early to the Z-ring. Probably stimulates Z-ring formation, perhaps through the cross-linking of FtsZ protofilaments. Its function overlaps with FtsA. In Mycolicibacterium smegmatis (strain ATCC 700084 / mc(2)155) (Mycobacterium smegmatis), this protein is Cell division protein SepF.